Consider the following 300-residue polypeptide: B1 kinase (300 aa).

Residues 16-282 (WVVGPLIGKG…ITMVNSLTYF (267 aa)) form the Protein kinase domain. ATP is bound by residues 22–30 (IGKGGFGSI) and K45. N147 functions as the Proton acceptor in the catalytic mechanism.

It belongs to the protein kinase superfamily. Ser/Thr protein kinase family. Poxviruses subfamily. As to quaternary structure, interacts with host JIP1; this interaction increases the amount of MAPK bound to JIP1 and subsequently increases the activity of transcription factors, such as JUN, that respond to these complexes. Interacts with protein OPG198; this interaction inhibits the repressive activity of OPG198 pseudokinase on viral replication factory formation. The cofactor is Mg(2+). Post-translationally, autophosphorylated.

It localises to the virion. The protein localises to the host cytoplasm. The enzyme catalyses L-seryl-[protein] + ATP = O-phospho-L-seryl-[protein] + ADP + H(+). It carries out the reaction L-threonyl-[protein] + ATP = O-phospho-L-threonyl-[protein] + ADP + H(+). Functionally, essential serine/threonine-protein kinase that plays different role in the viral life cycle. Phosphorylates the host small ribosomal protein RACK1 thereby customizing the ribosomes to a state optimal for viral mRNAs (which contain poly-A leaders) but not for host mRNAs. Facilitates viral DNA replication by inhibiting host BANF1, a cellular host defense responsive to foreign DNA. Phosphorylates host BANF1 on serine and threonine residues; this leads to BANF1 relocalization to the cytoplasm, loss of dimerization and impaired DNA binding activity. Indeed, BANF1 activity depends on its DNA-binding property which is blocked by VPK1-mediated phosphorylation. Required for viral intermediate genes expression, probably by inhibiting host BANF1. Modulates cellular responses via host JUN by two different mechanisms, either by direct phosphorylation or by modulation of upstream JIP1-MAPK complexes. Seems to participate in the accumulation/processing of late proteins and thus in virion maturation. In addition, inhibits B12 repressive activity on viral DNA replication via a phosphorylation-dependent mechanism. This chain is B1 kinase (OPG187), found in Homo sapiens (Human).